The following is a 118-amino-acid chain: Cobalt transport protein CbiN (118 aa).

A run of 2 helical transmembrane segments spans residues 7–27 and 70–90; these read INAL…VLGL and SALF…YFGL. Residues 99–118 are disordered; that stretch reads ERASAASGAAAAPGDAPEGD. The segment covering 102 to 118 has biased composition (low complexity); the sequence is SAASGAAAAPGDAPEGD.

Belongs to the CbiN family. As to quaternary structure, forms an energy-coupling factor (ECF) transporter complex composed of an ATP-binding protein (A component, CbiO), a transmembrane protein (T component, CbiQ) and 2 possible substrate-capture proteins (S components, CbiM and CbiN) of unknown stoichimetry.

Its subcellular location is the cell membrane. The protein operates within cofactor biosynthesis; adenosylcobalamin biosynthesis. Functionally, part of the energy-coupling factor (ECF) transporter complex CbiMNOQ involved in cobalt import. The polypeptide is Cobalt transport protein CbiN (Streptomyces coelicolor (strain ATCC BAA-471 / A3(2) / M145)).